A 536-amino-acid polypeptide reads, in one-letter code: Zinc finger CCCH domain-containing protein 18 (536 aa).

The C3H1-type zinc finger occupies 156–183 (EFPVKICHYFNKGFCKHGNNCRYFHGQI). The HTH OST-type domain maps to 211-294 (SLEKLEGEII…HGQHSVILAE (84 aa)). The RRM domain occupies 317-392 (RQIYLTFPAE…ARVLVKPYRE (76 aa)).

Functionally, possesses ribonuclease activity in vitro. This Arabidopsis thaliana (Mouse-ear cress) protein is Zinc finger CCCH domain-containing protein 18.